The sequence spans 317 residues: Ribosomal protein L11 methyltransferase (317 aa).

Residues T169, G190, D211, and N256 each contribute to the S-adenosyl-L-methionine site.

Belongs to the methyltransferase superfamily. PrmA family.

It is found in the cytoplasm. The enzyme catalyses L-lysyl-[protein] + 3 S-adenosyl-L-methionine = N(6),N(6),N(6)-trimethyl-L-lysyl-[protein] + 3 S-adenosyl-L-homocysteine + 3 H(+). Methylates ribosomal protein L11. The polypeptide is Ribosomal protein L11 methyltransferase (Helicobacter hepaticus (strain ATCC 51449 / 3B1)).